Here is a 54-residue protein sequence, read N- to C-terminus: Preprotein translocase subunit SecG (54 aa).

The Cytoplasmic portion of the chain corresponds to 1–30 (MSKNKQDAGLSTSAGLVRYMDEDASKIKIA). The chain crosses the membrane as a helical span at residues 31–52 (PEKVLGITISIMVLLFILNYGL). The Extracellular segment spans residues 53–54 (LA).

The protein belongs to the SEC61-beta family. Component of the protein translocase complex. Heterotrimer consisting of alpha (SecY), beta (SecG) and gamma (SecE) subunits. Can form oligomers of the heterotrimer.

The protein resides in the cell membrane. In terms of biological role, involved in protein export. The function of the beta subunit is unknown, but it may be involved in stabilization of the trimeric complex. This chain is Preprotein translocase subunit SecG, found in Methanococcus aeolicus (strain ATCC BAA-1280 / DSM 17508 / OCM 812 / Nankai-3).